We begin with the raw amino-acid sequence, 93 residues long: MSRMVQCVKLGHEAEGLDRPPYPGALGARIYQEVSKEAWQGWLKHQTMLINEYRLSPIDPKSRTFLEKQMEAYFFGDGAQSPEGYVPPAPQDS.

This sequence belongs to the Fe(2+)-trafficking protein family.

In terms of biological role, could be a mediator in iron transactions between iron acquisition and iron-requiring processes, such as synthesis and/or repair of Fe-S clusters in biosynthetic enzymes. The polypeptide is Probable Fe(2+)-trafficking protein (Acidithiobacillus ferrooxidans (strain ATCC 23270 / DSM 14882 / CIP 104768 / NCIMB 8455) (Ferrobacillus ferrooxidans (strain ATCC 23270))).